The sequence spans 42 residues: Statherin (42 aa).

The interval 1–6 (DSSEEK) is hydroxyapatite-binding; inhibits crystal growth. S2 and S3 each carry phosphoserine. Residues 18–42 (RYGPYQPFVPPPLYPQPYQPYQPQY) form a disordered region. A hydrophobic; inhibits precipitation of calcium phosphate salts region spans residues 18 to 42 (RYGPYQPFVPPPLYPQPYQPYQPQY). Pro residues predominate over residues 24-42 (PFVPPPLYPQPYQPYQPQY).

It belongs to the histatin/statherin family. Secreted by parotid and submandibular glands.

The protein resides in the secreted. Functionally, salivary protein that stabilizes saliva supersaturated with calcium salts by inhibiting the precipitation of calcium phosphate salts. It also modulates hydroxyapatite crystal formation on the tooth surface. The protein is Statherin (STATH) of Macaca arctoides (Stump-tailed macaque).